A 187-amino-acid chain; its full sequence is dTTP/UTP pyrophosphatase (187 aa).

D64 acts as the Proton acceptor in catalysis.

Belongs to the Maf family. YhdE subfamily. A divalent metal cation is required as a cofactor.

It localises to the cytoplasm. The catalysed reaction is dTTP + H2O = dTMP + diphosphate + H(+). It carries out the reaction UTP + H2O = UMP + diphosphate + H(+). In terms of biological role, nucleoside triphosphate pyrophosphatase that hydrolyzes dTTP and UTP. May have a dual role in cell division arrest and in preventing the incorporation of modified nucleotides into cellular nucleic acids. This Leptospira interrogans serogroup Icterohaemorrhagiae serovar Lai (strain 56601) protein is dTTP/UTP pyrophosphatase.